Reading from the N-terminus, the 1820-residue chain is Sodium channel protein (1820 aa).

Topologically, residues 1-117 (MARKFSSARP…FNPIRRGAIR (117 aa)) are cytoplasmic. One copy of the I repeat lies at 108-410 (FNPIRRGAIR…VAMAYEEQNQ (303 aa)). A helical transmembrane segment spans residues 118 to 138 (VFVNSAFNFFIMFTIFSNCIF). The Extracellular portion of the chain corresponds to 139–149 (MTISNPPAWSK). A helical membrane pass occupies residues 150 to 171 (IVEYTFTGIYTFEVIVKVLSRG). Residues 172–176 (FCIGH) are Cytoplasmic-facing. The chain crosses the membrane as a helical span at residues 177 to 197 (FTFLRDPWNWLDFSVVTMTYI). At 198–203 (TEFIDL) the chain is on the extracellular side. A helical; Voltage-sensor transmembrane segment spans residues 204 to 224 (RNVSALRTFRVLRALKTITIF). Topologically, residues 225-243 (PGLKTIVRALIESMKQMGD) are cytoplasmic. Residues 244–264 (VVILTVFSLAVFTLAGMQLFM) traverse the membrane as a helical segment. Topologically, residues 265–346 (GNLRHKCIRW…PNYGYTNYDN (82 aa)) are extracellular. Cys271 and Cys324 form a disulfide bridge. N-linked (GlcNAc...) asparagine glycans are attached at residues Asn278, Asn288, and Asn317. The non-homologous region of repeat I stretch occupies residues 285–342 (SAYNTTFDFTAYIENEENQYFLDGALDALLCGNNSDAGKCPEGYTCMKAGRNPNYGYT). The pore-forming intramembrane region spans 347-371 (FAWTFLCLFRLMLQDYWENLYQMTL). The Extracellular segment spans residues 372–378 (RAAGKSY). The helical transmembrane segment at 379 to 402 (MVFFIMVIFLGSFYLINLILAVVA) threads the bilayer. Over 403-557 (MAYEEQNQAT…CCGPWVFLKK (155 aa)) the chain is Cytoplasmic. The disordered stretch occupies residues 483–507 (SVKLSTEEQRSDSKSMDSKHSVDKP). The segment covering 487-507 (STEEQRSDSKSMDSKHSVDKP) has biased composition (basic and acidic residues). Residues 548 to 811 (CCGPWVFLKK…EEDDEVNSLQ (264 aa)) form an II repeat. The helical transmembrane segment at 558–578 (WVHFVMMDPFTDLFITLCIIL) threads the bilayer. The Extracellular portion of the chain corresponds to 579-599 (NTLFMSIEHHPMNESFQSLLS). Asn591 carries N-linked (GlcNAc...) asparagine glycosylation. Residues 600–620 (AGNLVFTTIFAAEMVLKIIAL) traverse the membrane as a helical segment. The Cytoplasmic portion of the chain corresponds to 621–625 (DPYYY). A helical transmembrane segment spans residues 626-643 (FQQTWNIFDSIIVSLSLL). Residues 644–650 (ELGLSNM) are Extracellular-facing. A helical; Voltage-sensor transmembrane segment spans residues 651 to 671 (QGMSVLRSLRLLRIFKLAKSW). Residues 672–690 (PTLNILIKIICNSVGALGN) are Cytoplasmic-facing. A helical membrane pass occupies residues 691–711 (LTIVLAIIVFIFALVGFQLFG). The Extracellular segment spans residues 712 to 734 (KNYKEYVCKISDDCELPRWHMND). An intramembrane region (pore-forming) is located at residues 735-755 (FFHSFLIVFRALCGEWIETMW). Topologically, residues 756 to 766 (DCMEVGGVPMC) are extracellular. A disulfide bridge links Cys757 with Cys766. Residues 767–790 (LAVYMMVIIIGNLVMLNLFLALLL) form a helical membrane-spanning segment. Topologically, residues 791 to 1004 (SSFSSDNLSS…TIVEHDYFET (214 aa)) are cytoplasmic. Disordered stretches follow at residues 844–864 (PPSD…DTLP) and 891–959 (VKGE…SKDP). Residues 896–910 (EIEEEGLVDSSDEED) show a composition bias toward acidic residues. Polar residues predominate over residues 924–935 (SVCSTVDYSPSE). The span at 942–953 (EEEEEEEEEPEE) shows a compositional bias: acidic residues. The stretch at 988-1295 (NLRRTCYTIV…KKYYNAMKKL (308 aa)) is one III repeat. A helical membrane pass occupies residues 1005 to 1025 (FIIFMILLSSGVLAFEDIYIW). Over 1026-1037 (RRRVIKVILEYA) the chain is Extracellular. The helical transmembrane segment at 1038–1058 (DKVFTYVFIVEMLLKWVAYGF) threads the bilayer. Residues 1059–1065 (KRYFTDA) are Cytoplasmic-facing. A helical transmembrane segment spans residues 1066–1086 (WCWLDFVIVGASIMGITSSLL). Topologically, residues 1087–1091 (GYEEL) are extracellular. A helical; Voltage-sensor transmembrane segment spans residues 1092–1112 (GAIKNLRTIRALRPLRALSRF). The Cytoplasmic portion of the chain corresponds to 1113 to 1131 (EGMKVVVRALLGAIPSIMN). The helical transmembrane segment at 1132-1152 (VLLVCLMFWLIFSIMGVNLFA) threads the bilayer. Residues 1153–1199 (GKFYRCINTTTDEILPVEEVNNRSDCMALMYTNEVRWVNLKVNYDNA) lie on the Extracellular side of the membrane. 2 N-linked (GlcNAc...) asparagine glycosylation sites follow: Asn1160 and Asn1174. Positions 1172–1194 (VNNRSDCMALMYTNEVRWVNLKV) are non-homologous region of repeat III. Positions 1200 to 1221 (GMGYLSLLQVSTFKGWMDIMYA) form an intramembrane region, pore-forming. Residues 1222-1243 (AVDSREVEDQPIYEINVYMYLY) lie on the Extracellular side of the membrane. A helical membrane pass occupies residues 1244–1264 (FVIFIVFGAFFTLNLFIGVII). The Cytoplasmic portion of the chain corresponds to 1265 to 1320 (DNFNRQKQKLGGEDLFMTEEQKKYYNAMKKLGSKKAAKCIPRPSNVVQGVVYDIVT). One copy of the IV repeat lies at 1304-1602 (IPRPSNVVQG…WHKFDVHGTQ (299 aa)). Residues 1321–1341 (QPFTDIFIMALICINMVAMMV) form a helical membrane-spanning segment. The Extracellular segment spans residues 1342–1352 (ESEDQSQVKKD). Residues 1353-1376 (ILSQINVIFVIIFTVECLLKLLAL) traverse the membrane as a helical segment. The Cytoplasmic segment spans residues 1377-1380 (RQYF). Residues 1381–1398 (FTVGWNVFDFAVVVISII) form a helical membrane-spanning segment. Residues 1399-1416 (GLLLSDIIEKYFVSPTLF) lie on the Extracellular side of the membrane. The helical; Voltage-sensor transmembrane segment at 1417 to 1437 (RVIRLARIARVLRLIRAAKGI) threads the bilayer. At 1438–1453 (RTLLFALMMSLPALFN) the chain is on the cytoplasmic side. A helical membrane pass occupies residues 1454-1474 (IGLLLFLIMFIFSIFGMSNFA). The Extracellular portion of the chain corresponds to 1475–1490 (YVKKQGGVDDIFNFET). The tract at residues 1490–1505 (TFGNSMICLFEITTSA) is non-homologous region of repeat IV. The pore-forming intramembrane region spans 1491–1513 (FGNSMICLFEITTSAGWDGLLLP). At 1514-1543 (TLNTGPPDCDPDVENPGTDVRGNCGNPGKG) the chain is on the extracellular side. The chain crosses the membrane as a helical span at residues 1544–1567 (ITFFCSYIILSFLVVVNMYIAIIL). Residues 1568 to 1820 (ENFGVAQEES…GAIVVRESIV (253 aa)) lie on the Cytoplasmic side of the membrane.

Belongs to the sodium channel (TC 1.A.1.10) family.

The protein resides in the cell membrane. Mediates the voltage-dependent sodium ion permeability of excitable membranes. Assuming opened or closed conformations in response to the voltage difference across the membrane, the protein forms a sodium-selective channel through which Na(+) ions may pass in accordance with their electrochemical gradient. The sequence is that of Sodium channel protein from Electrophorus electricus (Electric eel).